Reading from the N-terminus, the 478-residue chain is Antiviral innate immune response effector IFIT1 (478 aa).

6 TPR repeats span residues 52 to 85 (VGIH…MQKE), 95 to 128 (LVTW…CKKP), 139 to 174 (PEID…DHEN), 183 to 216 (ISAY…NPDN), 218 to 249 (YLKV…NMSS), and 251 to 284 (TYVF…TPTS). Position 147 (Trp147) interacts with mRNA. Gly190 is an RNA binding site. Positions 259, 289, 290, and 336 each coordinate RNA. 4 TPR repeats span residues 305–339 (ATKG…KPTF), 340–373 (EVAH…KPVV), 378–412 (QDIH…EQTS), and 437–470 (LESL…AADF).

Belongs to the IFIT family. Component of an interferon-dependent multiprotein complex, at least composed of IFIT1, IFIT2 and IFIT3. Interacts (via TPR repeats 1-4) with RPL15. Interacts with STING1/MITA; could disrupt STING1 interaction with MAVS or TBK1, acting as a negative-feedback regulator of virus-triggered signaling. Interacts with EIF3E; this could be an alternative way to inhibit translation. In terms of processing, phosphorylated. ISGylated.

It is found in the cytoplasm. Plays a key role in the innate immune response as part of an interferon-dependent multiprotein complex, recognizing and sequestering viral RNAs that lack host-specific 2'-O-methylation at their 5' cap. By distinguishing these RNAs from host mRNAs, inhibits their translation by competing with the translation initiation factor eIF4E. Could also prevent viral replication through its interaction with DNA replication origin-binding protein E1 of several viruses. Causes the translocation of E1 from the nucleus to the cytoplasm and can also inhibit its helicase activity in vitro. The chain is Antiviral innate immune response effector IFIT1 from Macaca fascicularis (Crab-eating macaque).